A 779-amino-acid polypeptide reads, in one-letter code: Probable ATP-dependent RNA helicase DHX40 (779 aa).

The tract at residues 1–53 (MSRFPAVAGRAPRRQEEGERSRDLQEERPSAVCIADREEKGCTSQEGGTTPTF) is disordered. Basic and acidic residues predominate over residues 13–41 (RRQEEGERSRDLQEERPSAVCIADREEKG). Positions 42–53 (CTSQEGGTTPTF) are enriched in polar residues. Residues 63-231 (IQAVRDNSFL…FGNCPIFDIP (169 aa)) enclose the Helicase ATP-binding domain. Residue 76 to 83 (GNTGSGKT) coordinates ATP. Residues 173–176 (DEAH) carry the DEAH box motif. Residues 263-442 (TMDIHLNEMA…SVVLTLKCLA (180 aa)) form the Helicase C-terminal domain. A disordered region spans residues 737 to 779 (SKDVLKKMQRRNDDKSISDARARFLERKQQRTQDHSDTRKETG).

The protein belongs to the DEAD box helicase family. DEAH subfamily.

The catalysed reaction is ATP + H2O = ADP + phosphate + H(+). In terms of biological role, probable ATP-dependent RNA helicase. The sequence is that of Probable ATP-dependent RNA helicase DHX40 (DHX40) from Pongo abelii (Sumatran orangutan).